We begin with the raw amino-acid sequence, 372 residues long: PqqA peptide cyclase (372 aa).

One can recognise a Radical SAM core domain in the interval 4–219 (APPPLSVLLE…VDTARRELGD (216 aa)). Residues cysteine 18, cysteine 22, and cysteine 25 each coordinate [4Fe-4S] cluster. The tract at residues 342-372 (ATAEREAAAPAPEFIYRRPERPAPATADTLE) is disordered.

This sequence belongs to the radical SAM superfamily. PqqE family. In terms of assembly, interacts with PqqD. The interaction is necessary for activity of PqqE. The cofactor is [4Fe-4S] cluster.

It catalyses the reaction [PQQ precursor protein] + S-adenosyl-L-methionine = E-Y cross-linked-[PQQ precursor protein] + 5'-deoxyadenosine + L-methionine + H(+). Its pathway is cofactor biosynthesis; pyrroloquinoline quinone biosynthesis. In terms of biological role, catalyzes the cross-linking of a glutamate residue and a tyrosine residue in the PqqA protein as part of the biosynthesis of pyrroloquinoline quinone (PQQ). The protein is PqqA peptide cyclase of Xanthomonas oryzae pv. oryzae (strain MAFF 311018).